Consider the following 568-residue polypeptide: MGRQWGPSMRVAEQAGCVVSASRAGQPDAGSWSCSGVILSRNPGLVLCHGGIFTPFLRTGSAALTQTGTAFLPGDSCSDDLRLHVQWGPTAASPAGRADQELPGLCTPQCASLGLEPGAPSRARARPLQPPRPAQLLLLLSCPAFRSHFARLFGADAVDQWHFVSSAPDDAVSEEEEEDQLRALGWFALLRVQRGAAAEERRGPVVTVAPLGAVVKGAPLLACGSPFGAFCPDIFLNTLSRGVLSNAAGPLLLTDARCLPGTEGGGVFAARPAGALVALVAAPLCWKAREWVGLTLLCAAAPLLQVARWALARLHPGSASLSVLLPPPDVSTPRGLPLRDLGPPWAAAAVLVECGTVWGSGVVVAPRLVVTCRHVAPREAARVLVHSATPKNVAIWGQVVFATQETSPYDIAVVSLEEELNGVPTPVPAGHFHEGEPVSVVGFGVFGQACGPSVTSGILSAVVRVDGSPVMLQTTCAVHGGSSGGPLFSSGSGDLLGIVASNTRDNNTGATYPHLNFSIPITVLQPALKQYSQTGDLGGLRELDHTTEPVRVVWRLQRPLSEVPRSKL.

The segment at 332 to 568 is serine protease; sequence TPRGLPLRDL…PLSEVPRSKL (237 aa). Residues histidine 374, aspartate 410, and serine 483 each act as charge relay system in the active site.

Belongs to the peptidase S1B family. Homodimer. Forms a heterodimer with the C-terminal cleavage product (49 kDa form). Forms a heterodimer with the N-terminal cleavage product (10 kDa form). Interacts with PEX5. Interacts with LONP2. In terms of processing, self-cleavage gives rise to an N-terminal 10-kDa fragment and C-terminal 49-kDa fragment upon import into the peroxisomes. The full-lengh TYSND1 is the active the proteolytic processing of PTS1- and PTS2-proteins and in self-cleavage, and intermolecular self-cleavage of TYSND1 down-regulates its protease activity.

It is found in the peroxisome. Its activity is regulated as follows. Inhibited by N-ethylmaleimide (NEM). Not affected by leupeptin or trans-epoxysuccinyl-l-leucylamido-(4-gianidino) butane (E64). Peroxisomal protease that mediates both the removal of the leader peptide from proteins containing a PTS2 target sequence and processes several PTS1-containing proteins. Catalyzes the processing of PTS1-proteins involved in the peroxisomal beta-oxidation of fatty acids. This chain is Peroxisomal leader peptide-processing protease (Tysnd1), found in Mus musculus (Mouse).